The chain runs to 489 residues: Ketol-acid reductoisomerase (NADP(+)) (489 aa).

Positions 16 to 207 (LRKCKLVEKN…GSHRAGVLHS (192 aa)) constitute a KARI N-terminal Rossmann domain. NADP(+) contacts are provided by residues 44-47 (CGSQ), arginine 67, serine 77, and 107-109 (DKQ). The active site involves histidine 131. Glycine 157 lines the NADP(+) pocket. KARI C-terminal knotted domains are found at residues 208 to 343 (SFIA…KCKI) and 344 to 483 (CHKE…MVDM). Positions 216, 220, 388, and 392 each coordinate Mg(2+). Position 413 (serine 413) interacts with substrate.

The protein belongs to the ketol-acid reductoisomerase family. Mg(2+) is required as a cofactor.

It catalyses the reaction (2R)-2,3-dihydroxy-3-methylbutanoate + NADP(+) = (2S)-2-acetolactate + NADPH + H(+). The catalysed reaction is (2R,3R)-2,3-dihydroxy-3-methylpentanoate + NADP(+) = (S)-2-ethyl-2-hydroxy-3-oxobutanoate + NADPH + H(+). The protein operates within amino-acid biosynthesis; L-isoleucine biosynthesis; L-isoleucine from 2-oxobutanoate: step 2/4. It functions in the pathway amino-acid biosynthesis; L-valine biosynthesis; L-valine from pyruvate: step 2/4. Functionally, involved in the biosynthesis of branched-chain amino acids (BCAA). Catalyzes an alkyl-migration followed by a ketol-acid reduction of (S)-2-acetolactate (S2AL) to yield (R)-2,3-dihydroxy-isovalerate. In the isomerase reaction, S2AL is rearranged via a Mg-dependent methyl migration to produce 3-hydroxy-3-methyl-2-ketobutyrate (HMKB). In the reductase reaction, this 2-ketoacid undergoes a metal-dependent reduction by NADPH to yield (R)-2,3-dihydroxy-isovalerate. The chain is Ketol-acid reductoisomerase (NADP(+)) from Buchnera aphidicola subsp. Schlechtendalia chinensis.